The sequence spans 760 residues: Catecholate siderophore receptor Fiu (760 aa).

The N-terminal stretch at 1-31 (MENNRNFPARQFHSLTFFAGLCIGITPVAQA) is a signal peptide. In terms of domain architecture, TBDR plug spans 67 to 175 (PVADTTRTMT…PTGSINMISK (109 aa)). One can recognise a TBDR beta-barrel domain in the interval 180-760 (DSGIDASASI…TFLLTANMHF (581 aa)). Positions 743 to 760 (RYHPGEPRTFLLTANMHF) match the TonB C-terminal box motif.

It belongs to the TonB-dependent receptor family.

The protein localises to the cell outer membrane. In terms of biological role, involved in the active transport across the outer membrane of iron complexed with catecholate siderophores such as dihydroxybenzoylserine and dihydroxybenzoate. It derives its energy for transport by interacting with the trans-periplasmic membrane protein TonB. Can also transport catechol-substituted cephalosporins. Receptor for microcins M, H47 and E492. This chain is Catecholate siderophore receptor Fiu (fiu), found in Escherichia coli O157:H7.